The sequence spans 55 residues: Large ribosomal subunit protein bL33 (55 aa).

Positions 1–11 (MAKGGREKIKL) are enriched in basic and acidic residues. The disordered stretch occupies residues 1-26 (MAKGGREKIKLESTAGTGHFYTTDKN).

It belongs to the bacterial ribosomal protein bL33 family.

The protein is Large ribosomal subunit protein bL33 of Methylibium petroleiphilum (strain ATCC BAA-1232 / LMG 22953 / PM1).